The primary structure comprises 565 residues: Urocanate hydratase (565 aa).

NAD(+)-binding positions include 61–62, Q139, 185–187, E205, R210, 251–252, 272–276, 282–283, and Y331; these read GG, GMG, NA, QTSAH, and YL. Residue C419 is part of the active site. A disordered region spans residues 453–472; that stretch reads LDSGSVASPNRETESMRDGS. The segment covering 463-472 has biased composition (basic and acidic residues); the sequence is RETESMRDGS. Residue G501 coordinates NAD(+).

It belongs to the urocanase family. NAD(+) serves as cofactor.

It is found in the cytoplasm. It catalyses the reaction 4-imidazolone-5-propanoate = trans-urocanate + H2O. The protein operates within amino-acid degradation; L-histidine degradation into L-glutamate; N-formimidoyl-L-glutamate from L-histidine: step 2/3. Its function is as follows. Catalyzes the conversion of urocanate to 4-imidazolone-5-propionate. This Pseudomonas savastanoi pv. phaseolicola (strain 1448A / Race 6) (Pseudomonas syringae pv. phaseolicola (strain 1448A / Race 6)) protein is Urocanate hydratase.